The primary structure comprises 92 residues: UPF0250 protein XF_1271 (92 aa).

The protein belongs to the UPF0250 family.

This is UPF0250 protein XF_1271 from Xylella fastidiosa (strain 9a5c).